The following is a 251-amino-acid chain: Probable transcriptional regulatory protein Francci3_1368 (251 aa).

The protein belongs to the TACO1 family.

Its subcellular location is the cytoplasm. The protein is Probable transcriptional regulatory protein Francci3_1368 of Frankia casuarinae (strain DSM 45818 / CECT 9043 / HFP020203 / CcI3).